Consider the following 493-residue polypeptide: WAS/WASL-interacting protein family member 1 (493 aa).

The span at 1–14 shows a compositional bias: pro residues; that stretch reads MPVPPPPAPPPPPT. A disordered region spans residues 1–493; that stretch reads MPVPPPPAPP…GAPPLPPIPR (493 aa). Positions 21–31 are enriched in polar residues; sequence EKPTLNKTEQA. A WH2 domain is found at 32 to 49; the sequence is GRNALLSDISKGKKLKKT. Arg33 bears the Asymmetric dimethylarginine mark. Residues 45–48 form a binds actin region; the sequence is KLKK. Residues 67 to 105 show a composition bias toward gly residues; the sequence is ASAGGYGGGGGGGGGGGGGGGGSGGNFGGGGPPGLGGLF. An omega-N-methylarginine mark is found at Arg126 and Arg135. 3 stretches are compositionally biased toward pro residues: residues 142-155, 162-175, and 183-195; these read FSPPSGPGRFPAPS, PPEPPRNRMPPPRP, and SLPPPVPNTPRPV. Residue Ser143 is modified to Phosphoserine. Ser227 is modified (phosphoserine). 3 stretches are compositionally biased toward pro residues: residues 239 to 248, 274 to 290, and 298 to 315; these read FPRPPLPPTP, VPPPPSQTSKPPVPSTP, and APPPPPPPSRPGPPPLPP. Residues Ser330 and Ser340 each carry the phosphoserine modification. Residues 336-361 show a composition bias toward pro residues; the sequence is PPLPSPGRSGPLPPPPSERPPPPVRD. XRSGPXPPXP motif repeat units follow at residues 342 to 351, 364 to 373, and 400 to 409; these read GRSGPLPPPP and PRSGPRPPLP. The segment covering 403–424 has biased composition (pro residues); the sequence is GPRPPLPPDRPGAGAPPPPPPS. The span at 425–434 shows a compositional bias: polar residues; that stretch reads TSVRNGFQDS. Over residues 470-484 the composition is skewed to basic and acidic residues; the sequence is ARNESRSGSNRRERG.

This sequence belongs to the verprolin family. Binds to WAS within the N-terminal region, at a site distinct from the CDC42-binding site. Binds profilin and actin. Binds to WASL. Interacts with DBNL. Interacts with DBNL. Interacts with FNBP1L (via the SH3 domain).

The protein resides in the cytoplasmic vesicle. The protein localises to the cytoplasm. It localises to the cytoskeleton. Its subcellular location is the cell projection. It is found in the ruffle. Plays a role in the reorganization of the actin cytoskeleton. Contributes with NCK1 and GRB2 in the recruitment and activation of WASL. May participate in regulating the subcellular localization of WASL, resulting in the disassembly of stress fibers in favor of filopodia formation. Plays a role in the formation of cell ruffles. In Mus musculus (Mouse), this protein is WAS/WASL-interacting protein family member 1 (Wipf1).